Here is a 194-residue protein sequence, read N- to C-terminus: Small ribosomal subunit protein uS11m (194 aa).

It belongs to the universal ribosomal protein uS11 family. As to quaternary structure, component of the mitochondrial small ribosomal subunit (mt-SSU). Mature mammalian 55S mitochondrial ribosomes consist of a small (28S) and a large (39S) subunit. The 28S small subunit contains a 12S ribosomal RNA (12S mt-rRNA) and 30 different proteins. The 39S large subunit contains a 16S rRNA (16S mt-rRNA), a copy of mitochondrial valine transfer RNA (mt-tRNA(Val)), which plays an integral structural role, and 52 different proteins.

It localises to the mitochondrion. The polypeptide is Small ribosomal subunit protein uS11m (MRPS11) (Homo sapiens (Human)).